We begin with the raw amino-acid sequence, 27 residues long: Antimicrobial peptide 1 (27 aa).

As to expression, expressed by the skin glands.

It is found in the secreted. Functionally, has very weak antimicrobial activity against Gram-positive bacterium S.aureus and Gram-negative bacterium E.coli and stronger activity against yeast C.albicans. Enhances the antibacterial activity of XT3. Has hemolytic activity against human red blood cells. This Xenopus tropicalis (Western clawed frog) protein is Antimicrobial peptide 1.